The sequence spans 66 residues: Conotoxin Lt3.5 (66 aa).

The N-terminal stretch at 1–20 (MMSKLGALLTICLLLFPLTA) is a signal peptide. Positions 21–53 (VPLDGDQPLDRHAERMHDGISPKRHPWFDPVKR) are excised as a propeptide. Disulfide bonds link Cys54–Cys66, Cys55–Cys62, and Cys59–Cys65. At Pro64 the chain carries 4-hydroxyproline.

The protein belongs to the conotoxin M superfamily. As to expression, expressed by the venom duct.

The protein resides in the secreted. The chain is Conotoxin Lt3.5 from Conus litteratus (Lettered cone).